The primary structure comprises 160 residues: Cyanate hydratase (160 aa).

Residues R100, E103, and S126 contribute to the active site.

This sequence belongs to the cyanase family.

It catalyses the reaction cyanate + hydrogencarbonate + 3 H(+) = NH4(+) + 2 CO2. Functionally, catalyzes the reaction of cyanate with bicarbonate to produce ammonia and carbon dioxide. The sequence is that of Cyanate hydratase from Penicillium rubens (strain ATCC 28089 / DSM 1075 / NRRL 1951 / Wisconsin 54-1255) (Penicillium chrysogenum).